The chain runs to 628 residues: Forkhead box protein O (628 aa).

Thr50 bears the Phosphothreonine; by PKB/AKT1 mark. A Phosphoserine modification is found at Ser81. A DNA-binding region (fork-head) is located at residues 101-207 (WGNLSYADLI…ETSRYEKRRG (107 aa)). 2 disordered regions span residues 188–210 (KSVR…GRAK) and 223–270 (GLND…SSCG). Ser196 bears the Phosphoserine; by PKB/AKT1 mark. 2 stretches are compositionally biased toward polar residues: residues 227–236 (ATPSPSSSVS) and 261–270 (RASSNASSCG). The residue at position 264 (Ser264) is a Phosphoserine; by PKB/AKT1. Phosphoserine occurs at positions 267, 268, and 273. Disordered regions lie at residues 327–373 (SAAS…SLQP) and 398–451 (NSVT…QQQQ). The segment covering 334-343 (TQPPPPPYPA) has biased composition (pro residues). Over residues 344–359 (PQQQQQQQPQQQQAYT) the composition is skewed to low complexity. A compositionally biased stretch (polar residues) spans 411–423 (SEPSSDSLNTYSN). The span at 438–451 (QQQRQQQQQQQQQQ) shows a compositional bias: low complexity.

In terms of assembly, interacts with melt.

The protein resides in the cytoplasm. Its subcellular location is the nucleus. Transcription factor involved in the regulation of the insulin signaling pathway. Consistently activates both the downstream target Thor\d4EBP and the feedback control target InR. Involved in negative regulation of the cell cycle, modulating cell growth and proliferation. In response to cellular stresses, such as nutrient deprivation or increased levels of reactive oxygen species, foxo is activated and inhibits growth through the action of target genes such as Thor. Foxo activated in the adult fat body can regulate lifespan in adults; an insulin peptide itself may function as one secondary messenger of insulin-regulated aging. Also regulates Lip4, homolog of human acid lipases, thereby acting as a key modulator of lipid metabolism by insulin signaling and integrates insulin responses to glucose and lipid homeostasis. The protein is Forkhead box protein O of Drosophila willistoni (Fruit fly).